The chain runs to 34 residues: Photosystem II reaction center protein M (34 aa).

The chain crosses the membrane as a helical span at residues 5–25 (ILGLTATALFIIIPTSFLLIL).

This sequence belongs to the PsbM family. In terms of assembly, PSII is composed of 1 copy each of membrane proteins PsbA, PsbB, PsbC, PsbD, PsbE, PsbF, PsbH, PsbI, PsbJ, PsbK, PsbL, PsbM, PsbT, PsbX, PsbY, PsbZ, Psb30/Ycf12, at least 3 peripheral proteins of the oxygen-evolving complex and a large number of cofactors. It forms dimeric complexes.

The protein resides in the plastid. Its subcellular location is the chloroplast thylakoid membrane. Functionally, one of the components of the core complex of photosystem II (PSII). PSII is a light-driven water:plastoquinone oxidoreductase that uses light energy to abstract electrons from H(2)O, generating O(2) and a proton gradient subsequently used for ATP formation. It consists of a core antenna complex that captures photons, and an electron transfer chain that converts photonic excitation into a charge separation. This subunit is found at the monomer-monomer interface. The sequence is that of Photosystem II reaction center protein M from Stigeoclonium helveticum (Green alga).